The sequence spans 434 residues: Asparagine--tRNA ligase (434 aa).

Belongs to the class-II aminoacyl-tRNA synthetase family.

It is found in the cytoplasm. The catalysed reaction is tRNA(Asn) + L-asparagine + ATP = L-asparaginyl-tRNA(Asn) + AMP + diphosphate + H(+). This Pyrococcus abyssi (strain GE5 / Orsay) protein is Asparagine--tRNA ligase.